The primary structure comprises 403 residues: 3-hydroxy-3-methylglutaryl-coenzyme A reductase (403 aa).

Residues Glu-99 and Asp-303 each act as charge relay system in the active site. The active-site Proton donor is His-398.

The protein belongs to the HMG-CoA reductase family.

It carries out the reaction (R)-mevalonate + 2 NADP(+) + CoA = (3S)-3-hydroxy-3-methylglutaryl-CoA + 2 NADPH + 2 H(+). It participates in metabolic intermediate biosynthesis; (R)-mevalonate biosynthesis; (R)-mevalonate from acetyl-CoA: step 3/3. Its activity is regulated as follows. Is competitively inhibited by (R)-HMG-CoA and lovastatin (formerly called mevinolin). In terms of biological role, catalyzes the NADPH-dependent reductive deacylation of (S)-3-hydroxy-3-methylglutaryl-CoA (HMG-CoA) to (R)-mevalonate. Functions in the mevalonate (MVA) pathway leading to isopentenyl diphosphate (IPP), a key precursor for the biosynthesis of isoprenoid compounds such as archaeal membrane lipids. Is also able to catalyze the reduction of mevaldehyde to mevalonate and the oxidative acylation of mevaldehyde to HMG-CoA. This chain is 3-hydroxy-3-methylglutaryl-coenzyme A reductase (hmgA), found in Haloferax volcanii (strain ATCC 29605 / DSM 3757 / JCM 8879 / NBRC 14742 / NCIMB 2012 / VKM B-1768 / DS2) (Halobacterium volcanii).